The chain runs to 228 residues: Protein Thf1 (228 aa).

The stretch at 201-223 forms a coiled coil; sequence IKRSKEVVDELSQTERRKREERA. The disordered stretch occupies residues 209 to 228; the sequence is DELSQTERRKREERAVSQPG.

It belongs to the THF1 family.

May be involved in photosynthetic membrane biogenesis. The polypeptide is Protein Thf1 (Gloeobacter violaceus (strain ATCC 29082 / PCC 7421)).